The chain runs to 441 residues: Cysteine--tRNA ligase (441 aa).

C24 is a binding site for Zn(2+). The 'HIGH' region motif lies at 26–36 (PTIYDYIHIGN). 3 residues coordinate Zn(2+): C204, H230, and E234. A 'KMSKS' region motif is present at residues 262–266 (KMSKS). Residue K265 coordinates ATP.

It belongs to the class-I aminoacyl-tRNA synthetase family. Monomer. Zn(2+) serves as cofactor.

It localises to the cytoplasm. It catalyses the reaction tRNA(Cys) + L-cysteine + ATP = L-cysteinyl-tRNA(Cys) + AMP + diphosphate. The sequence is that of Cysteine--tRNA ligase from Mesoplasma florum (strain ATCC 33453 / NBRC 100688 / NCTC 11704 / L1) (Acholeplasma florum).